The chain runs to 307 residues: Low-salt glycan biosynthesis hexosyltransferase Agl10 (307 aa).

It belongs to the glycosyltransferase 2 family.

The protein operates within protein modification; protein glycosylation. It participates in cell surface structure biogenesis; S-layer biogenesis. Hexosyltransferase involved in N-glycan biosynthetic pathway that takes place under low-salt conditions (1.75 M instead of 3.4 M). Participates in the formation of the tetrasaccharide present at 'Asn-532' of S-layer glycoprotein Csg, consisting of a sulfated hexose, 2 hexoses and rhamnose. Involved in the addition of final rhamnose (sugar 4) of the tetrasaccharide on the dolichol phosphate carrier. The chain is Low-salt glycan biosynthesis hexosyltransferase Agl10 (agl10) from Haloferax volcanii (strain ATCC 29605 / DSM 3757 / JCM 8879 / NBRC 14742 / NCIMB 2012 / VKM B-1768 / DS2) (Halobacterium volcanii).